Reading from the N-terminus, the 624-residue chain is Forkhead box protein O1 (624 aa).

2 disordered regions span residues 1–62 (MAEA…PSAS) and 94–128 (APLS…SRRN). Threonine 24 is modified (phosphothreonine; by PKB/AKT1 or PKB/AKT2 and SGK1). 2 stretches are compositionally biased toward low complexity: residues 37 to 62 (SATS…PSAS) and 105 to 119 (AAAA…AGQP). The fork-head DNA-binding region spans 130–224 (WGNLSYADLI…KSGKSPRRRA (95 aa)). DNA-binding stretches follow at residues 181–188 (NSIRHNLS) and 204–207 (SSWW). Serine 182 carries the post-translational modification Phosphoserine; by STK4/MST1. Serine 188, serine 204, and serine 205 each carry phosphoserine. The disordered stretch occupies residues 204–306 (SSWWMLNPEG…RLSPIMTEQD (103 aa)). Residues lysine 215 and lysine 218 each carry the N6-acetyllysine modification. Serine 219 is modified (phosphoserine; by CDK1). 2 positions are modified to omega-N-methylarginine; by PRMT1: arginine 221 and arginine 223. The Nuclear localization signal signature appears at 221–223 (RRR). Residue serine 226 is modified to Phosphoserine; by PKB/AKT1 and SGK1. N6-acetyllysine is present on residues lysine 232, lysine 235, and lysine 244. Positions 234-245 (AKSRGRAAKKKA) are enriched in basic residues. Residues 253 to 532 (GAGDSPGSQF…RLAPVKTALQ (280 aa)) are sufficient for interaction with NLK. Phosphoserine occurs at positions 257 and 268. A compositionally biased stretch (polar residues) spans 279 to 296 (NWSTFRPRTSSNASTISG). At serine 289 the chain carries Phosphoserine; by PKB/AKT1. The residue at position 292 (serine 292) is a Phosphoserine; by CK1 and SGK1. A Phosphoserine; by CK1 modification is found at serine 295. At serine 299 the chain carries Phosphoserine; by DYRK1A. Threonine 303 bears the Phosphothreonine mark. Residues 333 to 428 (SEISNPENME…YGGMSQYCAP (96 aa)) are required for interaction with RUNX2. Lysine 393 carries the post-translational modification N6-acetyllysine. Positions 431-435 (LKELL) match the Required for interaction with SIRT1 motif.

In terms of assembly, interacts with LRPPRC. Interacts with RUNX2; the interaction inhibits RUNX2 transcriptional activity and mediates the IGF1/insulin-dependent BGLAP expression in osteoblasts Interacts with PPP2R1A; the interaction regulates the dephosphorylation of FOXO1 at Thr-24 and Ser-263 leading to its nuclear import. Interacts with NLK. Interacts with SIRT1; the interaction results in the deacetylation of FOXO1 leading to activation of FOXO1-mediated transcription of genes involved in DNA repair and stress resistance. Binds to CDK1. Interacts with the 14-3-3 proteins, YWHAG and YWHAZ; the interactions require insulin-stimulated phosphorylation on Thr-24, promote nuclear exit and loss of transcriptional activity. Interacts with SKP2; the interaction ubiquitinates FOXO1 leading to its proteasomal degradation. The interaction requires the presence of KRIT1. Interacts (via the C-terminal half) with ATF4 (via its DNA binding domain); the interaction occurs in osteoblasts, regulates glucose homeostasis via suppression of beta-cell proliferation and subsequent decrease in insulin production. Interacts with PRMT1; the interaction methylates FOXO1, prevents PKB/AKT1 phosphorylation and retains FOXO1 in the nucleus. Interacts with EP300 and CREBBP; the interactions acetylate FOXO1. Interacts with SIRT2; the interaction is disrupted in response to oxidative stress or serum deprivation, leading to increased level of acetylated FOXO1, which promotes stress-induced autophagy by stimulating E1-like activating enzyme ATG7. Interacts (acetylated form) with ATG7; the interaction is increased in response to oxidative stress or serum deprivation and promotes the autophagic process leading to cell death. Interacts (acetylated form) with PPARG. Interacts with XBP1; this interaction is direct and leads to FOXO1 ubiquitination and degradation via the proteasome pathway. Interacts (via the Fork-head domain) with CEBPA; the interaction increases when FOXO1 is deacetylated. Interacts with WDFY2. Forms a complex with WDFY2 and AKT1. Interacts with CRY1. Interacts with PPIA/CYPA; the interaction promotes FOXO1 dephosphorylation, nuclear accumulation and transcriptional activity. Interacts with TOX4; FOXO1 is required for full induction of TOX4-dependent activity and the interaction is inhibited by insulin. Interacts (when phosphorylated on Ser-226) with STUB1/CHIP. Post-translationally, phosphorylation by NLK promotes nuclear export and inhibits the transcriptional activity. In response to growth factors, phosphorylation on Thr-24, Ser-226 and Ser-292 by PKB/AKT1 promotes nuclear export and inactivation of transactivational activity. Phosphorylation on Thr-24 is required for binding 14-3-3 proteins. Phosphorylation of Ser-226 decreases DNA-binding activity and promotes the phosphorylation of Thr-24 and Ser-289, permitting phosphorylation of Ser-292 and Ser-295, probably by CDK1, leading to nuclear exclusion and loss of function. Stress signals, such as response to oxygen or nitric oxide, attenuate the PKB/AKT1-mediated phosphorylation leading to nuclear retention. Phosphorylation of Ser-299 is independent of IGF1 and leads to reduced function. Dephosphorylated on Thr-24 and Ser-226 by PP2A in beta-cells under oxidative stress leading to nuclear retention. Phosphorylation of Ser-219 by CDK1 disrupts binding of 14-3-3 proteins leading to nuclear accumulation and has no effect on DNA binding nor transcriptional activity. Phosphorylation by STK4/MST1 on Ser-182, upon oxidative stress, inhibits binding to 14-3-3 proteins and nuclear export. PPIA/CYPA promotes its dephosphorylation on Ser-226. In terms of processing, ubiquitinated by SKP2. Ubiquitination leads to proteasomal degradation. Ubiquitinated by STUB1/CHIP; when Ser-226 is phosphorylated. Methylation inhibits AKT1-mediated phosphorylation at Ser-226 and is increased by oxidative stress. Post-translationally, acetylated. Acetylation at Lys-232 and Lys-244 are necessary for autophagic cell death induction. Deacetylated by SIRT2 in response to oxidative stress or serum deprivation, thereby negatively regulating FOXO1-mediated autophagic cell death. Once in the nucleus, acetylated by CREBBP/EP300. Acetylation diminishes the interaction with target DNA and attenuates the transcriptional activity. It increases the phosphorylation at Ser-226. Deacetylation by SIRT1 results in reactivation of the transcriptional activity. Oxidative stress by hydrogen peroxide treatment appears to promote deacetylation and uncoupling of insulin-induced phosphorylation. By contrast, resveratrol acts independently of acetylation. Acetylated at Lys-393, promoting its localization to the nucleus and transcription factor activity. Deacetylation at Lys-393 by SIRT6, promotes its translocation into the cytoplasm, preventing its transcription factor activity. Deacetylation and subsequent inhibition by SIRT6 has different effects depending on cell types: it inhibits gluconeogenesis in hepatocytes, promotes glucose sensing in pancreatic beta-cells and regulates lipid catabolism in brown adipocytes.

Its subcellular location is the cytoplasm. The protein localises to the nucleus. Its function is as follows. Transcription factor that is the main target of insulin signaling and regulates metabolic homeostasis in response to oxidative stress. Binds to the insulin response element (IRE) with consensus sequence 5'-TT[G/A]TTTTG-3' and the related Daf-16 family binding element (DBE) with consensus sequence 5'-TT[G/A]TTTAC-3'. Activity suppressed by insulin. Main regulator of redox balance and osteoblast numbers and controls bone mass. Orchestrates the endocrine function of the skeleton in regulating glucose metabolism. Also acts as a key regulator of chondrogenic commitment of skeletal progenitor cells in response to lipid availability: when lipids levels are low, translocates to the nucleus and promotes expression of SOX9, which induces chondrogenic commitment and suppresses fatty acid oxidation. Acts synergistically with ATF4 to suppress osteocalcin/BGLAP activity, increasing glucose levels and triggering glucose intolerance and insulin insensitivity. Also suppresses the transcriptional activity of RUNX2, an upstream activator of osteocalcin/BGLAP. Acts as an inhibitor of glucose sensing in pancreatic beta cells by acting as a transcription repressor and suppressing expression of PDX1. In hepatocytes, promotes gluconeogenesis by acting together with PPARGC1A and CEBPA to activate the expression of genes such as IGFBP1, G6PC1 and PCK1. Also promotes gluconeogenesis by directly promoting expression of PPARGC1A and G6PC1. Important regulator of cell death acting downstream of CDK1, PKB/AKT1 and STK4/MST1. Promotes neural cell death. Mediates insulin action on adipose tissue. Regulates the expression of adipogenic genes such as PPARG during preadipocyte differentiation and, adipocyte size and adipose tissue-specific gene expression in response to excessive calorie intake. Regulates the transcriptional activity of GADD45A and repair of nitric oxide-damaged DNA in beta-cells. Required for the autophagic cell death induction in response to starvation or oxidative stress in a transcription-independent manner. Mediates the function of MLIP in cardiomyocytes hypertrophy and cardiac remodeling. Positive regulator of apoptosis in cardiac smooth muscle cells as a result of its transcriptional activation of pro-apoptotic genes. Regulates endothelial cell (EC) viability and apoptosis in a PPIA/CYPA-dependent manner via transcription of CCL2 and BCL2L11 which are involved in EC chemotaxis and apoptosis. The protein is Forkhead box protein O1 (FOXO1) of Bos taurus (Bovine).